Here is a 601-residue protein sequence, read N- to C-terminus: Elongation factor 4 (601 aa).

One can recognise a tr-type G domain in the interval 7 to 189 (RNIRNFSIIA…AIVHRIPPPK (183 aa)). Residues 19–24 (DHGKST) and 136–139 (NKID) each bind GTP.

It belongs to the TRAFAC class translation factor GTPase superfamily. Classic translation factor GTPase family. LepA subfamily.

It is found in the cell inner membrane. The catalysed reaction is GTP + H2O = GDP + phosphate + H(+). Functionally, required for accurate and efficient protein synthesis under certain stress conditions. May act as a fidelity factor of the translation reaction, by catalyzing a one-codon backward translocation of tRNAs on improperly translocated ribosomes. Back-translocation proceeds from a post-translocation (POST) complex to a pre-translocation (PRE) complex, thus giving elongation factor G a second chance to translocate the tRNAs correctly. Binds to ribosomes in a GTP-dependent manner. This chain is Elongation factor 4, found in Xanthomonas axonopodis pv. citri (strain 306).